The primary structure comprises 1171 residues: WD repeat-containing protein on Y chromosome (1171 aa).

8 WD repeats span residues 157-201 (EIPE…LRSA), 331-370 (RIPL…EPSA), 374-413 (GHNG…LLQT), 464-503 (THAA…RKII), 516-555 (IIDI…VVRN), 603-643 (FHTD…RRYN), 748-787 (KVGD…IPQA), and 831-870 (GHLK…LGTL). The tract at residues 1076 to 1171 (RTSFTLSDYT…TNTMKSSNSH (96 aa)) is disordered. Polar residues-rich tracts occupy residues 1094–1106 (SSRN…SSGS) and 1161–1171 (KTNTMKSSNSH).

The protein is WD repeat-containing protein on Y chromosome of Drosophila grimshawi (Hawaiian fruit fly).